Reading from the N-terminus, the 206-residue chain is Large ribosomal subunit protein bL25 (206 aa).

A disordered region spans residues 168–206 (DPEESVVTVEVPEDASESTAAPEAAAPAADAAAPAADAK). The span at 184–206 (ESTAAPEAAAPAADAAAPAADAK) shows a compositional bias: low complexity.

The protein belongs to the bacterial ribosomal protein bL25 family. CTC subfamily. As to quaternary structure, part of the 50S ribosomal subunit; part of the 5S rRNA/L5/L18/L25 subcomplex. Contacts the 5S rRNA. Binds to the 5S rRNA independently of L5 and L18.

Functionally, this is one of the proteins that binds to the 5S RNA in the ribosome where it forms part of the central protuberance. This chain is Large ribosomal subunit protein bL25, found in Bifidobacterium longum (strain DJO10A).